The following is a 295-amino-acid chain: Pyridoxal 5'-phosphate synthase subunit PdxS (295 aa).

A D-ribose 5-phosphate-binding site is contributed by D25. K82 acts as the Schiff-base intermediate with D-ribose 5-phosphate in catalysis. D-ribose 5-phosphate is bound at residue G154. R166 serves as a coordination point for D-glyceraldehyde 3-phosphate. D-ribose 5-phosphate contacts are provided by residues G215 and 236–237; that span reads GS.

It belongs to the PdxS/SNZ family. In the presence of PdxT, forms a dodecamer of heterodimers.

The catalysed reaction is aldehydo-D-ribose 5-phosphate + D-glyceraldehyde 3-phosphate + L-glutamine = pyridoxal 5'-phosphate + L-glutamate + phosphate + 3 H2O + H(+). Its pathway is cofactor biosynthesis; pyridoxal 5'-phosphate biosynthesis. In terms of biological role, catalyzes the formation of pyridoxal 5'-phosphate from ribose 5-phosphate (RBP), glyceraldehyde 3-phosphate (G3P) and ammonia. The ammonia is provided by the PdxT subunit. Can also use ribulose 5-phosphate and dihydroxyacetone phosphate as substrates, resulting from enzyme-catalyzed isomerization of RBP and G3P, respectively. This chain is Pyridoxal 5'-phosphate synthase subunit PdxS, found in Natranaerobius thermophilus (strain ATCC BAA-1301 / DSM 18059 / JW/NM-WN-LF).